Here is a 406-residue protein sequence, read N- to C-terminus: Argininosuccinate synthase (406 aa).

ATP is bound by residues 11-19 (AYSGGLDTS) and Ala-38. Positions 91 and 96 each coordinate L-citrulline. Gly-121 is a binding site for ATP. L-aspartate contacts are provided by Thr-123, Asn-127, and Asp-128. Asn-127 contacts L-citrulline. Positions 131, 181, 190, 266, and 278 each coordinate L-citrulline.

Belongs to the argininosuccinate synthase family. Type 1 subfamily. In terms of assembly, homotetramer.

It localises to the cytoplasm. The enzyme catalyses L-citrulline + L-aspartate + ATP = 2-(N(omega)-L-arginino)succinate + AMP + diphosphate + H(+). Its pathway is amino-acid biosynthesis; L-arginine biosynthesis; L-arginine from L-ornithine and carbamoyl phosphate: step 2/3. The protein is Argininosuccinate synthase of Campylobacter curvus (strain 525.92).